The primary structure comprises 251 residues: Ubiquitin-conjugating enzyme E2 22 (251 aa).

A UBC core domain is found at 10–156 (NVIKQLAKEL…ARLYTGIHAK (147 aa)). The active-site Glycyl thioester intermediate is cysteine 94. Over residues 230–240 (GLAKVQADKKK) the composition is skewed to basic and acidic residues. The disordered stretch occupies residues 230–251 (GLAKVQADKKKVDARKKSLKRL). Positions 230-251 (GLAKVQADKKKVDARKKSLKRL) form a coiled coil. Basic residues predominate over residues 241–251 (VDARKKSLKRL).

It belongs to the ubiquitin-conjugating enzyme family. In terms of processing, self-ubiquitinated. Expressed in seeds, pistils, siliques, hypocotyls and leaves.

It carries out the reaction S-ubiquitinyl-[E1 ubiquitin-activating enzyme]-L-cysteine + [E2 ubiquitin-conjugating enzyme]-L-cysteine = [E1 ubiquitin-activating enzyme]-L-cysteine + S-ubiquitinyl-[E2 ubiquitin-conjugating enzyme]-L-cysteine.. Its pathway is protein modification; protein ubiquitination. In terms of biological role, accepts the ubiquitin from the E1 complex and catalyzes its covalent attachment to other proteins. The polypeptide is Ubiquitin-conjugating enzyme E2 22 (UBC22) (Arabidopsis thaliana (Mouse-ear cress)).